A 353-amino-acid chain; its full sequence is Rhodopsin (353 aa).

Over 1–36 the chain is Extracellular; the sequence is MNGTEGPYFYIPMVNTTGIVRSPYEYPQYYLVNPAA. Residues asparagine 2 and asparagine 15 are each glycosylated (N-linked (GlcNAc...) asparagine). The helical transmembrane segment at 37–61 threads the bilayer; sequence YAALGAYMFLLILVGFPVNFLTLYV. Topologically, residues 62–73 are cytoplasmic; sequence TLEHKKLRTPLN. Residues 74–96 traverse the membrane as a helical segment; it reads YILLNLAVADLFMVLGGFTTTMY. The Extracellular portion of the chain corresponds to 97 to 110; sequence TSMHGYFVLGRLGC. Cysteine 110 and cysteine 187 form a disulfide bridge. A helical transmembrane segment spans residues 111–133; sequence NVEGFFATLGGEIALWSLVVLAI. A 'Ionic lock' involved in activated form stabilization motif is present at residues 134-136; that stretch reads ERW. Residues 134–152 are Cytoplasmic-facing; that stretch reads ERWVVVCKPISNFRFSEDH. The helical transmembrane segment at 153 to 173 threads the bilayer; it reads AIMGLAFTWVMASACAVPPLV. The Extracellular portion of the chain corresponds to 174–202; it reads GWSRYIPEGMQCSCGIDYYTRAEGFNNES. N-linked (GlcNAc...) asparagine glycosylation occurs at asparagine 200. A helical transmembrane segment spans residues 203 to 224; sequence FVIYMFVCHFLIPLVVVFFCYG. The Cytoplasmic portion of the chain corresponds to 225–252; it reads RLLCAVKEAAAAQQESETTQRAEREVSR. The helical transmembrane segment at 253–274 threads the bilayer; sequence MVVIMVVAFLVCWCPYAGVAWY. The Extracellular portion of the chain corresponds to 275–286; sequence IFTHQGSEFGPL. A helical membrane pass occupies residues 287–308; that stretch reads FMTFPAFFAKSSSIYNPMIYIC. Position 296 is an N6-(retinylidene)lysine (lysine 296). Residues 309–353 are Cytoplasmic-facing; sequence MNKQFRHCMITTLCCGKNPFEEEEGASTTSKTEASSVSSSSVSPA. Residues cysteine 322 and cysteine 323 are each lipidated (S-palmitoyl cysteine). Residues 330-353 form a disordered region; it reads EEEGASTTSKTEASSVSSSSVSPA. A compositionally biased stretch (low complexity) spans 334–353; that stretch reads ASTTSKTEASSVSSSSVSPA.

Belongs to the G-protein coupled receptor 1 family. Opsin subfamily. Phosphorylated on some or all of the serine and threonine residues present in the C-terminal region. In terms of processing, contains one covalently linked retinal chromophore.

The protein localises to the membrane. It localises to the cell projection. Its subcellular location is the cilium. The protein resides in the photoreceptor outer segment. Functionally, photoreceptor required for image-forming vision at low light intensity. While most salt water fish species use retinal as chromophore, most freshwater fish use 3-dehydroretinal, or a mixture of retinal and 3-dehydroretinal. Light-induced isomerization of 11-cis to all-trans retinal triggers a conformational change that activates signaling via G-proteins. Subsequent receptor phosphorylation mediates displacement of the bound G-protein alpha subunit by arrestin and terminates signaling. In Chelon labrosus (Thicklip grey mullet), this protein is Rhodopsin (rho).